A 383-amino-acid chain; its full sequence is Protein delta homolog 2 (383 aa).

Positions 1 to 26 (MPSGCRCLHLVCLLCILAAPVKPVRA) are cleaved as a signal peptide. EGF-like domains follow at residues 27–58 (DDCS…LHCE), 62–89 (RMPG…KFCD), 91–129 (DEHV…RDCE), and 131–172 (KEGP…AHCE). Residues 27-306 (DDCSSHCDLA…RQEAGLGKSS (280 aa)) are Extracellular-facing. 17 cysteine pairs are disulfide-bonded: Cys-29–Cys-40, Cys-33–Cys-46, Cys-48–Cys-57, Cys-66–Cys-71, Cys-79–Cys-88, Cys-95–Cys-107, Cys-101–Cys-117, Cys-119–Cys-128, Cys-135–Cys-148, Cys-142–Cys-160, Cys-162–Cys-171, Cys-178–Cys-189, Cys-183–Cys-198, Cys-200–Cys-209, Cys-216–Cys-227, Cys-221–Cys-236, and Cys-238–Cys-247. N-linked (GlcNAc...) asparagine glycosylation is present at Asn-157. The 37-residue stretch at 174 to 210 (NVDDCLMRPCANGATCLDGINRFSCLCPEGFAGRFCT) folds into the EGF-like 5; calcium-binding domain. The EGF-like 6; calcium-binding domain occupies 212-248 (NLDDCASRPCQRGARCRDRVHDFDCLCPSGYGGKTCE). A helical membrane pass occupies residues 307–327 (LVAVVVFGAVTATLVLSTVLL). At 328 to 383 (TLRAWRRGVCPPGPCCYPAPHYAPARQDQECQVSMLPAGLPLPPDLPPEPGKTTAL) the chain is on the cytoplasmic side.

It localises to the membrane. Functionally, regulates adipogenesis. The sequence is that of Protein delta homolog 2 (DLK2) from Sus scrofa (Pig).